Here is a 192-residue protein sequence, read N- to C-terminus: uncharacterized protein (192 aa).

Helical transmembrane passes span 5–22, 42–61, 66–88, 101–118, 122–139, and 159–181; these read VPPLFFVCALFFAEGIGL, FLFLGGILITGNWVCIHYVY, LRFLTPLGVGASAFCLSTCSGKL, WGLLYALVFYITYTALNL, LVMWGVSCVGFLCFSTIL, and ALLLASMGFIALSLYGTDELWLF.

Its subcellular location is the cell membrane. This is an uncharacterized protein from Treponema pallidum (strain Nichols).